A 158-amino-acid polypeptide reads, in one-letter code: Ankyrin repeat domain-containing protein 37 (158 aa).

3 ANK repeats span residues 1–25 (MLLL…SVNA), 30–59 (CEQS…DLNQ), and 63–92 (FGEA…QIDL). Residues 129-149 (EQPNKDHCVQVLRLKRSFGSE) carry the Nuclear localization signal motif.

Post-translationally, ubiquitinated by the CRL2(FEM1B) complex, leading to its degradation.

The protein localises to the nucleus. It is found in the cytoplasm. This chain is Ankyrin repeat domain-containing protein 37 (ANKRD37), found in Bos taurus (Bovine).